We begin with the raw amino-acid sequence, 72 residues long: Translation initiation factor IF-1 2 (72 aa).

The S1-like domain occupies 1 to 72; the sequence is MAKEELIEFE…TKGRINYRHK (72 aa).

Belongs to the IF-1 family. Component of the 30S ribosomal translation pre-initiation complex which assembles on the 30S ribosome in the order IF-2 and IF-3, IF-1 and N-formylmethionyl-tRNA(fMet); mRNA recruitment can occur at any time during PIC assembly.

The protein localises to the cytoplasm. Its function is as follows. One of the essential components for the initiation of protein synthesis. Stabilizes the binding of IF-2 and IF-3 on the 30S subunit to which N-formylmethionyl-tRNA(fMet) subsequently binds. Helps modulate mRNA selection, yielding the 30S pre-initiation complex (PIC). Upon addition of the 50S ribosomal subunit IF-1, IF-2 and IF-3 are released leaving the mature 70S translation initiation complex. This chain is Translation initiation factor IF-1 2, found in Ralstonia nicotianae (strain ATCC BAA-1114 / GMI1000) (Ralstonia solanacearum).